The chain runs to 295 residues: Protease HtpX (295 aa).

The next 2 helical transmembrane spans lie at 5–25 (VILFLATNLAVLLVLSISMRL) and 43–63 (ALLIFAAIIGFSGSLISLAIS). His-148 provides a ligand contact to Zn(2+). Glu-149 is an active-site residue. His-152 is a Zn(2+) binding site. A run of 2 helical transmembrane segments spans residues 159-179 (VTLALIQGVVNTFVIFLARII) and 198-218 (FFITTLIAQTVLAILASLIVL). Glu-225 provides a ligand contact to Zn(2+).

The protein belongs to the peptidase M48B family. Zn(2+) serves as cofactor.

It is found in the cell inner membrane. The sequence is that of Protease HtpX from Nitrosococcus oceani (strain ATCC 19707 / BCRC 17464 / JCM 30415 / NCIMB 11848 / C-107).